The following is a 486-amino-acid chain: MAWQVSVPELEDRLQCPVCLEVFKEPLMLQCGHSYCKGCLLSLSRHLDSELRCPVCRQEVDSSSSPPNVSLARVIEALQLPGDPEPQVCTHHRNPLSLFCEKDQELICGLCGLLGSHQHHRVTPVSTVYSRMKEELAALISDLKQEQKKVEEQVAKLVNNRTRIVNESDVFSWVIRREFQELHHLVDEEKARCLEGVEGHTRGLVASLDMQLEQARGAQERLAQATCMLEQFGNESHYEFIRYHSTASSAELQQARLLEGAFSPISFKPGLHQADIKLTVWKRLFRKVLPAPESLKLDPTTAHPLLELSKGNTVVQCGLLAQRRASQPERFDYSTCVLASRGFSCGRHYWEVVVGSKSDWRLGVIKGTASRKGKLNKSPEHGVWLIGLKEGRVYEAFSCPRVPLPVAGHPHRIGVYLHYEQGELTFFDADRPDDLRLLYTFQADFQGKLYPILDTCWHERGSNSLPMVLPLPSGPGHLTPSQPTKL.

The RING-type zinc finger occupies 16 to 57 (CPVCLEVFKEPLMLQCGHSYCKGCLLSLSRHLDSELRCPVCR). A B box-type zinc finger spans residues 84 to 125 (PEPQVCTHHRNPLSLFCEKDQELICGLCGLLGSHQHHRVTPV). Zn(2+) is bound by residues Cys-89, His-92, Cys-111, and His-117. 2 coiled-coil regions span residues 125-170 (VSTV…ESDV) and 204-235 (LVAS…FGNE). In terms of domain architecture, B30.2/SPRY spans 275-474 (DIKLTVWKRL…LPMVLPLPSG (200 aa)). N6-acetyllysine is present on Lys-372.

It belongs to the TRIM/RBCC family. In terms of assembly, can form dimers and trimers. Interacts with several E2 ubiquitin-conjugating enzymes, including UBE2L6, UBE2E1, UBE2E3. No interaction with UBE2H. Interacts with BECN1. Interacts with SQSTM1. Interacts with NLRP3. In terms of processing, auto-ubiquitinated. Post-translationally, acetylated by EP300 and KAT2B. HDAC6 drives TRIM50 deacetylation. Acetylation antagonizes with TRIM50 ubiquitination.

It localises to the cytoplasm. It carries out the reaction S-ubiquitinyl-[E2 ubiquitin-conjugating enzyme]-L-cysteine + [acceptor protein]-L-lysine = [E2 ubiquitin-conjugating enzyme]-L-cysteine + N(6)-ubiquitinyl-[acceptor protein]-L-lysine.. E3 ubiquitin-protein ligase that ubiquitinates Beclin-1/BECN1 in a 'Lys-63'-dependent manner enhancing its binding to ULK1. In turn, promotes starvation-induced autophagy activation. Also interacts with p62/SQSTM1 protein and thereby induces the formation and the autophagy clearance of aggresome-associated polyubiquitinated proteins through HDAC6 interaction. Also promotes NLRP3 inflammasome activation by directly inducing NLRP3 oligomerization independent of its E3 ligase function. The sequence is that of E3 ubiquitin-protein ligase TRIM50 (TRIM50) from Sus scrofa (Pig).